The following is a 290-amino-acid chain: Ribonuclease 3 (290 aa).

Positions 20 to 145 (YSCFYRILGF…FIGAIYLDRG (126 aa)) constitute an RNase III domain. A Mg(2+)-binding site is contributed by Glu-62. Residue Asp-66 is part of the active site. Mg(2+)-binding residues include Asn-131 and Glu-134. Glu-134 is an active-site residue. In terms of domain architecture, DRBM spans 173–242 (NFKSKLIEWS…AQMTLKKIKG (70 aa)). The tract at residues 254–290 (KTQNNVPAEDTTPESETSLTAENQQIDEIISTEEISV) is disordered. The span at 267–279 (ESETSLTAENQQI) shows a compositional bias: polar residues.

This sequence belongs to the ribonuclease III family. Homodimer. Mg(2+) serves as cofactor.

The protein localises to the cytoplasm. The catalysed reaction is Endonucleolytic cleavage to 5'-phosphomonoester.. In terms of biological role, digests double-stranded RNA. Involved in the processing of primary rRNA transcript to yield the immediate precursors to the large and small rRNAs (23S and 16S). Processes some mRNAs, and tRNAs when they are encoded in the rRNA operon. Processes pre-crRNA and tracrRNA of type II CRISPR loci if present in the organism. The polypeptide is Ribonuclease 3 (Bacteroides fragilis (strain ATCC 25285 / DSM 2151 / CCUG 4856 / JCM 11019 / LMG 10263 / NCTC 9343 / Onslow / VPI 2553 / EN-2)).